Consider the following 1306-residue polypeptide: MGAASGRRGPGLLLPLPLLLLLPPQPALALDPGLQPGNFSADEAGAQLFAQSYNSSAEQVLFQSVAASWAHDTNITAENARRQEEAALLSQEFAEAWGQKAKELYEPIWQNFTDPQLRRIIGAVRTLGSANLPLAKRQQYNALLSNMSRIYSTAKVCLPNKTATCWSLDPDLTNILASSRSYAMLLFAWEGWHNAAGIPLKPLYEDFTALSNEAYKQDGFTDTGAYWRSWYNSPTFEDDLEHLYQQLEPLYLNLHAFVRRALHRRYGDRYINLRGPIPAHLLGDMWAQSWENIYDMVVPFPDKPNLDVTSTMLQQGWNATHMFRVAEEFFTSLELSPMPPEFWEGSMLEKPADGREVVCHASAWDFYNRKDFRIKQCTRVTMDQLSTVHHEMGHIQYYLQYKDLPVSLRRGANPGFHEAIGDVLALSVSTPEHLHKIGLLDRVTNDTESDINYLLKMALEKIAFLPFGYLVDQWRWGVFSGRTPPSRYNFDWWYLRTKYQGICPPVTRNETHFDAGAKFHVPNVTPYIRYFVSFVLQFQFHEALCKEAGYEGPLHQCDIYRSTKAGAKLRKVLQAGSSRPWQEVLKDMVGLDALDAQPLLKYFQPVTQWLQEQNQQNGEVLGWPEYQWHPPLPDNYPEGIDLVTDEAEASKFVEEYDRTSQVVWNEYAEANWNYNTNITTETSKILLQKNMQIANHTLKYGTQARKFDVNQLQNTTIKRIIKKVQDLERAALPAQELEEYNKILLDMETTYSVATVCHPNGSCLQLEPDLTNVMATSRKYEDLLWAWEGWRDKAGRAILQFYPKYVELINQAARLNGYVDAGDSWRSMYETPSLEQDLERLFQELQPLYLNLHAYVRRALHRHYGAQHINLEGPIPAHLLGNMWAQTWSNIYDLVVPFPSAPSMDTTEAMLKQGWTPRRMFKEADDFFTSLGLLPVPPEFWNKSMLEKPTDGREVVCHASAWDFYNGKDFRIKQCTTVNLEDLVVAHHEMGHIQYFMQYKDLPVALREGANPGFHEAIGDVLALSVSTPKHLHSLNLLSSEGGSDEHDINFLMKMALDKIAFIPFSYLVDQWRWRVFDGSITKENYNQEWWSLRLKYQGLCPPVPRTQGDFDPGAKFHIPSSVPYIRYFVSFIIQFQFHEALCQAAGHTGPLHKCDIYQSKEAGQRLATAMKLGFSRPWPEAMQLITGQPNMSASAMLSYFKPLLDWLRTENELHGEKLGWPQYNWTPNSARSEGPLPDSGRVSFLGLDLDAQQARVGQWLLLFLGIALLVATLGLSQRLFSIRHRSLHRHSHGPQFGSEVELRHS.

Residues 1–29 (MGAASGRRGPGLLLPLPLLLLLPPQPALA) form the signal peptide. Residues 30-1256 (LDPGLQPGNF…GLDLDAQQAR (1227 aa)) lie on the Extracellular side of the membrane. Residues Asn-38, Asn-54, Asn-74, Glu-103, Asn-111, Ile-121, Tyr-140, Asn-146, and Asn-160 are each glycosylated (N-linked (GlcNAc...) asparagine). 2 consecutive Peptidase M2 domains span residues 40 to 624 (SADE…LGWP) and 643 to 1222 (VTDE…LGWP). The cysteines at positions 157 and 165 are disulfide-linked. Tyr-231 is a binding site for chloride. 2 N-linked (GlcNAc...) asparagine glycosylation sites follow: Asn-318 and Asn-368. Cys-359 and Cys-377 are oxidised to a cystine. His-390 provides a ligand contact to Zn(2+). The Proton acceptor 1 role is filled by Glu-391. Zn(2+) is bound by residues His-394, Pro-414, Glu-418, and Arg-442. N-linked (GlcNAc...) asparagine glycosylation is found at Asn-445 and Asn-509. His-520 acts as the Proton donor 1 in catalysis. Position 529 (Arg-529) interacts with chloride. Cys-545 and Cys-557 are joined by a disulfide. N-linked (GlcNAc...) asparagine glycans are attached at residues Asn-617 and Asn-677. N-linked (GlcNAc...) (complex) asparagine glycosylation is found at Asn-695 and Asn-714. Cys-757 and Cys-763 are disulfide-bonded. Asn-760 is a glycosylation site (N-linked (GlcNAc...) asparagine; partial). Chloride-binding residues include Arg-791 and Tyr-829. Asn-942 is a glycosylation site (N-linked (GlcNAc...) asparagine; partial). A disulfide bridge connects residues Cys-957 and Cys-975. His-988 is a Zn(2+) binding site. Glu-989 acts as the Proton acceptor 2 in catalysis. The Zn(2+) site is built by His-992 and Glu-1016. The chloride site is built by Trp-1090 and Arg-1094. The active-site Proton donor 2 is the His-1118. Residue Arg-1127 participates in chloride binding. A disulfide bond links Cys-1143 and Cys-1155. Asn-1191 is a glycosylation site (N-linked (GlcNAc...) asparagine; partial). The interval 1215–1256 (HGEKLGWPQYNWTPNSARSEGPLPDSGRVSFLGLDLDAQQAR) is juxtamembrane stalk. Residues 1257 to 1277 (VGQWLLLFLGIALLVATLGLS) form a helical membrane-spanning segment. The Cytoplasmic portion of the chain corresponds to 1278–1306 (QRLFSIRHRSLHRHSHGPQFGSEVELRHS). At Ser-1299 the chain carries Phosphoserine.

This sequence belongs to the peptidase M2 family. In terms of assembly, monomer and homodimer; homodimerizes following binding to an inhibitor. Interacts with calmodulin (CALM1, CALM2 or CALM3); interaction takes place in the cytoplasmic region and regulates phosphorylation and proteolytic cleavage. Requires Zn(2+) as cofactor. The cofactor is chloride. Produced following proteolytic cleavage by secretase enzymes that cleave the transmembrane form in the juxtamembrane stalk region upstream of the transmembrane region. Cleavage can take place at different sites of the juxtamembrane stalk region. In terms of processing, phosphorylated by CK2 on Ser-1299; which allows membrane retention. Phosphorylated on tyrosine residues on its extracellular part, promoting cleavage by secretase enzymes and formation of the soluble form (Angiotensin-converting enzyme, soluble form). In terms of tissue distribution, ubiquitously expressed, with highest levels in lung, kidney, heart, gastrointestinal system and prostate. Specifically expressed in spermatocytes and adult testis.

It localises to the cell membrane. It is found in the cytoplasm. The protein resides in the secreted. It catalyses the reaction Release of a C-terminal dipeptide, oligopeptide-|-Xaa-Yaa, when Xaa is not Pro, and Yaa is neither Asp nor Glu. Thus, conversion of angiotensin I to angiotensin II, with increase in vasoconstrictor activity, but no action on angiotensin II.. The enzyme catalyses angiotensin I + H2O = L-histidyl-L-leucine + angiotensin II. The catalysed reaction is bradykinin + H2O = L-Phe-L-Arg + bradykinin(1-7). It carries out the reaction substance P + H2O = substance P(1-9) + L-Leu-L-Met-NH2. It catalyses the reaction substance P + H2O = substance P(1-8) + Gly-L-Leu-L-Met-NH2. The enzyme catalyses substance P + H2O = L-Phe-L-Phe-Gly-L-Leu-L-Met-NH2 + substance P(1-6). The catalysed reaction is neurotensin + H2O = neurotensin(1-11) + L-isoleucyl-L-leucine. It carries out the reaction goralatide + H2O = N-acetyl-L-seryl-L-aspartate + L-lysyl-L-proline. It catalyses the reaction Met-enkephalin + H2O = L-phenylalanyl-L-methionine + L-tyrosylglycylglycine. The enzyme catalyses Leu-enkephalin + H2O = L-tyrosylglycylglycine + L-phenylalanyl-L-leucine. The catalysed reaction is Met-enkephalin-Arg-Phe + H2O = L-arginyl-L-phenylalanine + Met-enkephalin. With respect to regulation, the dipeptidyl carboxypeptidase activity is strongly activated by chloride. The dipeptidyl carboxypeptidase activity is specifically inhibited by lisinopril, captopril and enalaprilat. Strongly inhibited by lisinopril and captopril. Dipeptidyl carboxypeptidase that removes dipeptides from the C-terminus of a variety of circulating hormones, such as angiotensin I, bradykinin or enkephalins, thereby playing a key role in the regulation of blood pressure, electrolyte homeostasis or synaptic plasticity. Composed of two similar catalytic domains, each possessing a functional active site, with different selectivity for substrates. Plays a major role in the angiotensin-renin system that regulates blood pressure and sodium retention by the kidney by converting angiotensin I to angiotensin II, resulting in an increase of the vasoconstrictor activity of angiotensin. Also able to inactivate bradykinin, a potent vasodilator, and therefore enhance the blood pressure response. Acts as a regulator of synaptic transmission by mediating cleavage of neuropeptide hormones, such as substance P, neurotensin or enkephalins. Catalyzes degradation of different enkephalin neuropeptides (Met-enkephalin, Leu-enkephalin, Met-enkephalin-Arg-Phe and possibly Met-enkephalin-Arg-Gly-Leu). Acts as a regulator of synaptic plasticity in the nucleus accumbens of the brain by mediating cleavage of Met-enkephalin-Arg-Phe, a strong ligand of Mu-type opioid receptor OPRM1, into Met-enkephalin. Met-enkephalin-Arg-Phe cleavage by ACE decreases activation of OPRM1, leading to long-term synaptic potentiation of glutamate release. Also acts as a regulator of hematopoietic stem cell differentiation by mediating degradation of hemoregulatory peptide N-acetyl-SDKP (AcSDKP). Acts as a regulator of cannabinoid signaling pathway by mediating degradation of hemopressin, an antagonist peptide of the cannabinoid receptor CNR1. Involved in amyloid-beta metabolism by catalyzing degradation of Amyloid-beta protein 40 and Amyloid-beta protein 42 peptides, thereby preventing plaque formation. Catalyzes cleavage of cholecystokinin (maturation of Cholecystokinin-8 and Cholecystokinin-5) and Gonadoliberin-1 (both maturation and degradation) hormones. Degradation of hemoregulatory peptide N-acetyl-SDKP (AcSDKP) and amyloid-beta proteins is mediated by the N-terminal catalytic domain, while angiotensin I and cholecystokinin cleavage is mediated by the C-terminal catalytic region. Functionally, soluble form that is released in blood plasma and other body fluids following proteolytic cleavage in the juxtamembrane stalk region. In terms of biological role, isoform produced by alternative promoter usage that is specifically expressed in spermatocytes and adult testis, and which is required for male fertility. In contrast to somatic isoforms, only contains one catalytic domain. Acts as a dipeptidyl carboxypeptidase that removes dipeptides from the C-terminus of substrates. The identity of substrates that are needed for male fertility is unknown. May also have a glycosidase activity which releases GPI-anchored proteins from the membrane by cleaving the mannose linkage in the GPI moiety. The GPIase activity was reported to be essential for the egg-binding ability of the sperm. This activity is however unclear and has been challenged by other groups, suggesting that it may be indirect. The protein is Angiotensin-converting enzyme of Homo sapiens (Human).